Consider the following 324-residue polypeptide: 4-hydroxy-2-oxoglutarate aldolase, mitochondrial (324 aa).

The N-terminal 22 residues, 1 to 22 (MFAHRSFSLLCRRSAVTSWRSQ), are a transit peptide targeting the mitochondrion. 74 to 75 (SN) contributes to the substrate binding site. Lysine 193 serves as the catalytic Schiff-base intermediate with substrate. Positions 195 and 219 each coordinate substrate.

Belongs to the DapA family. In terms of assembly, homotetramer.

The protein localises to the mitochondrion. The catalysed reaction is (4S)-4-hydroxy-2-oxoglutarate = glyoxylate + pyruvate. It catalyses the reaction (4R)-4-hydroxy-2-oxoglutarate = glyoxylate + pyruvate. With respect to regulation, inhibited by divalent cations. Functionally, catalyzes the final step in the metabolic pathway of hydroxyproline. The chain is 4-hydroxy-2-oxoglutarate aldolase, mitochondrial from Danio rerio (Zebrafish).